We begin with the raw amino-acid sequence, 504 residues long: MTEQKYIVALDQGTTSSRAVILDHDANIVSVSQREFTQIYPEAGWVEHDPLEIYATQSSTLVETLAKAGIRSDQIAGIGITNQRETTIVWNKETGKPVYNAIVWQCRRTADTCEKLKEAGLEEYIRENTGLVVDPYFSGTKIKWILDNVEGAREDAEAGKLLFGTVDTWLVWKMTQGRVHVTDYTNASRTMVFNINTLQWDEKLLKELDIPLSMMPEVKSSSEVYGETNIGGKGGTRIPIAGIAGDQQAALYGQMCVEQGQAKNTYGTGCFLLMNTGKEKVTSRNGLLTTLACGPRGEASYALEGAVFMGGASIQWLRDEMKLLADAKDSEYFATKVDTSNGVYVVPAFTGLGAPYWDAYARGTIVGLTRGCGSNHIIRATLESIAYQTRDVIDAMQADSGIKLSALRVDGGAVANNFLMQFQSDVLDVAVHRPKVTEVTALGAAYLAGLAVGFWNGLDELADKAVIDRSFEPHHDEEKRNQRYRGWKRAVKCAQAWAELHDEE.

Residue Thr-14 participates in ADP binding. ATP contacts are provided by Thr-14, Thr-15, and Ser-16. Thr-14 contacts sn-glycerol 3-phosphate. Arg-18 is an ADP binding site. Sn-glycerol 3-phosphate is bound by residues Arg-84, Glu-85, Tyr-136, and Asp-246. Glycerol-binding residues include Arg-84, Glu-85, Tyr-136, Asp-246, and Gln-247. Residues Thr-268 and Gly-311 each contribute to the ADP site. 4 residues coordinate ATP: Thr-268, Gly-311, Gln-315, and Gly-412. ADP contacts are provided by Gly-412 and Asn-416.

This sequence belongs to the FGGY kinase family.

It catalyses the reaction glycerol + ATP = sn-glycerol 3-phosphate + ADP + H(+). The protein operates within polyol metabolism; glycerol degradation via glycerol kinase pathway; sn-glycerol 3-phosphate from glycerol: step 1/1. Its activity is regulated as follows. Inhibited by fructose 1,6-bisphosphate (FBP). Functionally, key enzyme in the regulation of glycerol uptake and metabolism. Catalyzes the phosphorylation of glycerol to yield sn-glycerol 3-phosphate. This Aliivibrio fischeri (strain ATCC 700601 / ES114) (Vibrio fischeri) protein is Glycerol kinase.